Here is a 315-residue protein sequence, read N- to C-terminus: 4-hydroxy-3-methylbut-2-enyl diphosphate reductase (315 aa).

[4Fe-4S] cluster is bound at residue Cys12. 2 residues coordinate (2E)-4-hydroxy-3-methylbut-2-enyl diphosphate: His41 and His74. Residues His41 and His74 each coordinate dimethylallyl diphosphate. Positions 41 and 74 each coordinate isopentenyl diphosphate. Position 96 (Cys96) interacts with [4Fe-4S] cluster. His124 contacts (2E)-4-hydroxy-3-methylbut-2-enyl diphosphate. Residue His124 coordinates dimethylallyl diphosphate. His124 is a binding site for isopentenyl diphosphate. The Proton donor role is filled by Glu126. A (2E)-4-hydroxy-3-methylbut-2-enyl diphosphate-binding site is contributed by Thr168. Residue Cys198 coordinates [4Fe-4S] cluster. The (2E)-4-hydroxy-3-methylbut-2-enyl diphosphate site is built by Ser226, Ser227, Asn228, and Ser270. Positions 226, 227, 228, and 270 each coordinate dimethylallyl diphosphate. 4 residues coordinate isopentenyl diphosphate: Ser226, Ser227, Asn228, and Ser270.

The protein belongs to the IspH family. The cofactor is [4Fe-4S] cluster.

The enzyme catalyses isopentenyl diphosphate + 2 oxidized [2Fe-2S]-[ferredoxin] + H2O = (2E)-4-hydroxy-3-methylbut-2-enyl diphosphate + 2 reduced [2Fe-2S]-[ferredoxin] + 2 H(+). The catalysed reaction is dimethylallyl diphosphate + 2 oxidized [2Fe-2S]-[ferredoxin] + H2O = (2E)-4-hydroxy-3-methylbut-2-enyl diphosphate + 2 reduced [2Fe-2S]-[ferredoxin] + 2 H(+). It functions in the pathway isoprenoid biosynthesis; dimethylallyl diphosphate biosynthesis; dimethylallyl diphosphate from (2E)-4-hydroxy-3-methylbutenyl diphosphate: step 1/1. The protein operates within isoprenoid biosynthesis; isopentenyl diphosphate biosynthesis via DXP pathway; isopentenyl diphosphate from 1-deoxy-D-xylulose 5-phosphate: step 6/6. Catalyzes the conversion of 1-hydroxy-2-methyl-2-(E)-butenyl 4-diphosphate (HMBPP) into a mixture of isopentenyl diphosphate (IPP) and dimethylallyl diphosphate (DMAPP). Acts in the terminal step of the DOXP/MEP pathway for isoprenoid precursor biosynthesis. The protein is 4-hydroxy-3-methylbut-2-enyl diphosphate reductase of Pseudomonas putida (strain W619).